The following is a 191-amino-acid chain: Decorin-binding protein A (191 aa).

The N-terminal stretch at 1–29 (MIKCNNKTFNNLLKLTILVNLLISCGLTG) is a signal peptide.

This sequence belongs to the decorin-binding protein family.

Functionally, binds to decorin which may mediate the adherence of B.burgdorferi to collagen fibers in skin and other tissues. The chain is Decorin-binding protein A (dbpA) from Borreliella burgdorferi (strain ATCC 35210 / DSM 4680 / CIP 102532 / B31) (Borrelia burgdorferi).